Here is a 1448-residue protein sequence, read N- to C-terminus: ABC transporter G family member 9 (1448 aa).

Residues 16–28 (EGGSNLNINTPSG) are compositionally biased toward polar residues. Positions 16 to 41 (EGGSNLNINTPSGMSDGDFNSGANSP) are disordered. Positions 136–385 (LFKPSTWKIE…FLDLGFDCEP (250 aa)) constitute an ABC transporter 1 domain. Residues 490 to 717 (WGDKFSLVSR…APYDNSVRVC (228 aa)) form the ABC transmembrane type-2 1 domain. A run of 7 helical transmembrane segments spans residues 494-514 (FSLVSRYLSVIIQSFVYGSVF), 530-550 (AIFAAILFNAFLSEGELFATF), 579-599 (IPLTTVQVFLFSIVVYFMFGL), 604-624 (GKFFIFCFTLIGATLATTNMF), 634-654 (LYVSQNVMTGILIFMISYCGY), 663-683 (PWFGWFFWANPFTYAFKALMA), and 748-768 (LNIFITYLWWVLFIIINMVAV). Positions 822–1066 (FTWENIKYTV…LTSYFERQGV (245 aa)) constitute an ABC transporter 2 domain. 858 to 865 (GSSGAGKT) contributes to the ATP binding site. The next 6 membrane-spanning stretches (helical) occupy residues 1157 to 1177 (FYAYGSILQAVMTGIIVGFTF), 1191 to 1211 (IFFIFQALLLGILLIFVVMVQ), 1233 to 1253 (FAISIVLVEIPYTIVCGSVFF), 1272 to 1292 (FYFWIIFIIYLFFCVSFGGAI), 1299 to 1319 (MFLAMTLVPLLIVFLFLFCGV), and 1422 to 1442 (IAILIAFWMFNIFLVVSFVYL). The 233-residue stretch at 1157 to 1389 (FYAYGSILQA…VPATGYVTNT (233 aa)) folds into the ABC transmembrane type-2 2 domain.

This sequence belongs to the ABC transporter superfamily. ABCG family. PDR (TC 3.A.1.205) subfamily.

The protein resides in the membrane. This Dictyostelium discoideum (Social amoeba) protein is ABC transporter G family member 9 (abcG9).